The following is a 388-amino-acid chain: MKWLLLLGLVALSECIIYKVPLVRKKSLRRNLSEHGLLKDFLKKHNLNPASKYFPQAEAPTLIDEQPLENYLDVEYFGTIGIGTPAQDFTVIFDTGSSNLWVPSVYCSSLACTNHNLFNPQDSSTYQSTSGTLSITYGTGSMTGILGYDTVQVGGISDTNQIFGLSETEPGSFLYYAPFDGILGLAYPSISSSGATPVFDNIWDQGLVSQDLFSVYLSADDQSGSVVIFGGIDSSYYTGSLNWVPVSVEGYWQISVDSITMNGEAIACAEGCQAIVDTGTSLLTGPTSPIANIQSDIGASENSDGEMVVSCSAISSLPDIVFTINGIQYPVPPSAYILQSQGSCTSGFQGMDVPTESGELWILGDVFIRQYFTVFDRANNQVGLAPVA.

The N-terminal stretch at 1–15 (MKWLLLLGLVALSEC) is a signal peptide. 2 consecutive propeptides (activation peptide) follow at residues 16–40 (IIYKVPLVRKKSLRRNLSEHGLLKD) and 41–62 (FLKKHNLNPASKYFPQAEAPTL). A Peptidase A1 domain is found at 76 to 385 (YFGTIGIGTP…DRANNQVGLA (310 aa)). Asp94 is an active-site residue. The cysteines at positions 107 and 112 are disulfide-linked. Ser130 carries the post-translational modification Phosphoserine. Cys268 and Cys272 are disulfide-bonded. Residue Asp277 is part of the active site. The cysteines at positions 311 and 344 are disulfide-linked.

The protein belongs to the peptidase A1 family. In terms of processing, each pepsinogen is converted to corresponding pepsin at pH 2.0 in part as a result of the release of a 47 AA activation segment and in part as a result of stepwise proteolytic cleavage via an intermediate form(s).

The protein localises to the secreted. It carries out the reaction Preferential cleavage: hydrophobic, preferably aromatic, residues in P1 and P1' positions. Cleaves 1-Phe-|-Val-2, 4-Gln-|-His-5, 13-Glu-|-Ala-14, 14-Ala-|-Leu-15, 15-Leu-|-Tyr-16, 16-Tyr-|-Leu-17, 23-Gly-|-Phe-24, 24-Phe-|-Phe-25 and 25-Phe-|-Tyr-26 bonds in the B chain of insulin.. Shows particularly broad specificity; although bonds involving phenylalanine and leucine are preferred, many others are also cleaved to some extent. In Macaca fuscata fuscata (Japanese macaque), this protein is Pepsin A-1 (PGA).